The following is a 227-amino-acid chain: Probable proteasome subunit beta type-2 (227 aa).

The propeptide at 1–6 (MITKTG) is removed in mature form. Thr-7 functions as the Nucleophile in the catalytic mechanism.

It belongs to the peptidase T1B family. As to quaternary structure, the 26S proteasome consists of a 20S proteasome core and two 19S regulatory subunits. The 20S proteasome core is composed of 28 subunits that are arranged in four stacked rings, resulting in a barrel-shaped structure. The two end rings are each formed by seven alpha subunits, and the two central rings are each formed by seven beta subunits. The catalytic chamber with the active sites is on the inside of the barrel.

Its subcellular location is the cytoplasm. It is found in the nucleus. The catalysed reaction is Cleavage of peptide bonds with very broad specificity.. Its function is as follows. The proteasome degrades poly-ubiquitinated proteins in the cytoplasm and in the nucleus. It is essential for the regulated turnover of proteins and for the removal of misfolded proteins. The proteasome is a multicatalytic proteinase complex that is characterized by its ability to cleave peptides with Arg, Phe, Tyr, Leu, and Glu adjacent to the leaving group at neutral or slightly basic pH. It has an ATP-dependent proteolytic activity. This Encephalitozoon cuniculi (strain GB-M1) (Microsporidian parasite) protein is Probable proteasome subunit beta type-2 (PUP1).